The sequence spans 277 residues: Ribosome-inactivating protein luffin-alpha (277 aa).

The first 19 residues, 1–19, serve as a signal peptide directing secretion; it reads MKRFTVLILAIFVAASTVE. The active site involves Glu-179.

Belongs to the ribosome-inactivating protein family. Type 1 RIP subfamily.

The catalysed reaction is Endohydrolysis of the N-glycosidic bond at one specific adenosine on the 28S rRNA.. The sequence is that of Ribosome-inactivating protein luffin-alpha from Luffa aegyptiaca (Sponge gourd).